Consider the following 856-residue polypeptide: Valine--tRNA ligase (856 aa).

The 'HIGH' region signature appears at 47–57 (PTASGVLHIGH). A 'KMSKS' region motif is present at residues 578–582 (KMSKS). Lys581 is a binding site for ATP.

The protein belongs to the class-I aminoacyl-tRNA synthetase family. ValS type 2 subfamily. Monomer.

Its subcellular location is the cytoplasm. The catalysed reaction is tRNA(Val) + L-valine + ATP = L-valyl-tRNA(Val) + AMP + diphosphate. Catalyzes the attachment of valine to tRNA(Val). As ValRS can inadvertently accommodate and process structurally similar amino acids such as threonine, to avoid such errors, it has a 'posttransfer' editing activity that hydrolyzes mischarged Thr-tRNA(Val) in a tRNA-dependent manner. In Tropheryma whipplei (strain Twist) (Whipple's bacillus), this protein is Valine--tRNA ligase.